The following is a 406-amino-acid chain: Multifunctional CCA protein (406 aa).

Positions 8 and 11 each coordinate ATP. 2 residues coordinate CTP: Gly8 and Arg11. Mg(2+) contacts are provided by Asp21 and Asp23. 3 residues coordinate ATP: Arg91, Arg137, and Arg140. Arg91, Arg137, and Arg140 together coordinate CTP. The HD domain maps to 228–329; it reads TGIHTLMVAQ…IKILNKFDVW (102 aa).

It belongs to the tRNA nucleotidyltransferase/poly(A) polymerase family. Bacterial CCA-adding enzyme type 1 subfamily. As to quaternary structure, monomer. Can also form homodimers and oligomers. Mg(2+) is required as a cofactor. The cofactor is Ni(2+).

The catalysed reaction is a tRNA precursor + 2 CTP + ATP = a tRNA with a 3' CCA end + 3 diphosphate. It carries out the reaction a tRNA with a 3' CCA end + 2 CTP + ATP = a tRNA with a 3' CCACCA end + 3 diphosphate. In terms of biological role, catalyzes the addition and repair of the essential 3'-terminal CCA sequence in tRNAs without using a nucleic acid template. Adds these three nucleotides in the order of C, C, and A to the tRNA nucleotide-73, using CTP and ATP as substrates and producing inorganic pyrophosphate. tRNA 3'-terminal CCA addition is required both for tRNA processing and repair. Also involved in tRNA surveillance by mediating tandem CCA addition to generate a CCACCA at the 3' terminus of unstable tRNAs. While stable tRNAs receive only 3'-terminal CCA, unstable tRNAs are marked with CCACCA and rapidly degraded. The protein is Multifunctional CCA protein of Vibrio campbellii (strain ATCC BAA-1116).